The sequence spans 117 residues: Large ribosomal subunit protein bL19 (117 aa).

This sequence belongs to the bacterial ribosomal protein bL19 family.

Its function is as follows. This protein is located at the 30S-50S ribosomal subunit interface and may play a role in the structure and function of the aminoacyl-tRNA binding site. This is Large ribosomal subunit protein bL19 from Rhodopirellula baltica (strain DSM 10527 / NCIMB 13988 / SH1).